The following is a 348-amino-acid chain: Dihydroorotase (348 aa).

Zn(2+)-binding residues include H17 and H19. Substrate contacts are provided by residues 19–21 (HLR) and N45. The Zn(2+) site is built by K103, H140, and H178. K103 carries the N6-carboxylysine modification. Residue H140 coordinates substrate. Position 223 (L223) interacts with substrate. Position 251 (D251) interacts with Zn(2+). D251 is an active-site residue. Substrate is bound by residues H255 and A267.

It belongs to the metallo-dependent hydrolases superfamily. DHOase family. Class II DHOase subfamily. In terms of assembly, homodimer. It depends on Zn(2+) as a cofactor.

It catalyses the reaction (S)-dihydroorotate + H2O = N-carbamoyl-L-aspartate + H(+). Its pathway is pyrimidine metabolism; UMP biosynthesis via de novo pathway; (S)-dihydroorotate from bicarbonate: step 3/3. Its function is as follows. Catalyzes the reversible cyclization of carbamoyl aspartate to dihydroorotate. The protein is Dihydroorotase of Escherichia coli O6:H1 (strain CFT073 / ATCC 700928 / UPEC).